Here is a 511-residue protein sequence, read N- to C-terminus: Histidine ammonia-lyase (511 aa).

Residues 142–144 constitute a cross-link (5-imidazolinone (Ala-Gly)); that stretch reads ASG. At S143 the chain carries 2,3-didehydroalanine (Ser).

This sequence belongs to the PAL/histidase family. Post-translationally, contains an active site 4-methylidene-imidazol-5-one (MIO), which is formed autocatalytically by cyclization and dehydration of residues Ala-Ser-Gly.

The protein resides in the cytoplasm. The catalysed reaction is L-histidine = trans-urocanate + NH4(+). It functions in the pathway amino-acid degradation; L-histidine degradation into L-glutamate; N-formimidoyl-L-glutamate from L-histidine: step 1/3. The sequence is that of Histidine ammonia-lyase (hutH) from Rhizobium meliloti (strain 1021) (Ensifer meliloti).